Here is an 887-residue protein sequence, read N- to C-terminus: MGRRWGSPALQRFPVLVLLLLLQVCGRRCDEAAPCQPGFAAETFSFSVPQDSVAAGRELGRVSFAACSGRPWAVYVPTDTRFKVNGDGVVSTKRPLTLYGRKISFTIYAQDAMGKRHSARVTVGRHRHRRHHHNHHLQDTTPAVLTFPKHDPGFLRRQKRDWVIPPISCLENHRGPYPMRLVQIKSNKDKESKVYYSITGQGADSPPVGIFIIERETGWLEVTEQLDREKIDRYTLLSHAVSASGQPVEDPMEIIITVMDQNDNKPVFIKEVFVGYIEENAKPGTSVMTVNATDADDAVNTDNGIVSYSIVSQQPPRPHPQMFTIDPAKGIISVLGTGLDRETTPNYTLIVQATDQEGKGLSNTATAIIEVTDANDNIPIFNPTMYEGVVEENKPGTEVARLTVTDQDAPGSPAWQAVYHIKSGNLDGAFSIITDPSTNNGILKTAKGLDYETKSRYDLVVTVENKVPLSVPITLSTASVLVTVLDVNEPPVFVPPIKRVGVPEDLPVGQQVTSYTAQDPDRDMRQKITYRMGSDPAGWLYIHPENGIVTATQPLDRESVHAINSTYKAIILAVDNGIPDTTGTGTLLLLLQDVNDNGPTPEPRSFEICSRQPEKQILSIVDKDLPPHTYPFKAALEHGSSNNWTVEIRGQDELAMGLKKELEPGEYNIFVKLTDSQGKAQVTQVKAQVCECEGTAKNCERRSYIVGGLGVPAILGILGGILALLILLLLLLLFARRRKVEKEPLLPPEDDMRDNVYNYDEEGGGEEDQDYDLSQLHRGLDARPEVIRNDVAPPLMAAPQYRPRPANPDEIGNFIDENLKAADTDPTAPPYDSLLVFDYEGGGSEATSLSSLNSSASDQDQDYDYLNEWGNRFKKLAELYGGGEDDE.

The signal sequence occupies residues 1 to 26; sequence MGRRWGSPALQRFPVLVLLLLLQVCG. A propeptide spanning residues 27–160 is cleaved from the precursor; it reads RRCDEAAPCQ…DPGFLRRQKR (134 aa). Cadherin domains are found at residues 161–268, 269–381, 382–493, 494–599, and 600–704; these read DWVI…KPVF, IKEV…IPIF, NPTM…PPVF, VPPI…DNGP, and TPEP…RRSY. Over 161-714 the chain is Extracellular; that stretch reads DWVIPPISCL…IVGGLGVPAI (554 aa). A Ca(2+)-binding site is contributed by Asp-263. A glycan (N-linked (GlcNAc...) asparagine) is linked at Asn-291. Asp-294 serves as a coordination point for Ca(2+). Asn-346 is a glycosylation site (N-linked (GlcNAc...) asparagine). N-linked (GlcNAc...) asparagine glycans are attached at residues Asn-564 and Asn-643. Residues 715–735 form a helical membrane-spanning segment; that stretch reads LGILGGILALLILLLLLLLFA. At 736 to 887 the chain is on the cytoplasmic side; sequence RRRKVEKEPL…ELYGGGEDDE (152 aa). Residues 745–770 are disordered; that stretch reads LLPPEDDMRDNVYNYDEEGGGEEDQD. Over residues 759–770 the composition is skewed to acidic residues; sequence YDEEGGGEEDQD.

Homodimer. Interacts with CTNNA2. Expressed in the liver.

It is found in the cell junction. Its subcellular location is the adherens junction. The protein localises to the cell membrane. It localises to the endosome. The protein resides in the golgi apparatus. It is found in the trans-Golgi network. Its subcellular location is the cytoplasm. The protein localises to the desmosome. In terms of biological role, cadherins are calcium-dependent cell adhesion proteins. They preferentially interact with themselves in a homophilic manner in connecting cells; cadherins may thus contribute to the sorting of heterogeneous cell types. Promotes organization of radial actin fiber structure and cellular response to contractile forces, via anchoring of radial actin fibers to CDH1 junction complexes at the cell membrane. E-cadherin is a ligand for integrin alpha-E/beta-7. The sequence is that of Cadherin-1 (CDH1) from Gallus gallus (Chicken).